The sequence spans 123 residues: UPF0295 protein Bcer98_0460 (123 aa).

2 helical membrane-spanning segments follow: residues 12-32 (IRTFALSLVFIGLLIAYLGVF) and 43-63 (FMMLGFLAVLASTFVYFWIGM).

It belongs to the UPF0295 family.

It is found in the cell membrane. The polypeptide is UPF0295 protein Bcer98_0460 (Bacillus cytotoxicus (strain DSM 22905 / CIP 110041 / 391-98 / NVH 391-98)).